Reading from the N-terminus, the 78-residue chain is Putative defensin-like protein 133 (78 aa).

Residues 1-24 (MKRSFLLLLTILTIFIILGQGVMG) form the signal peptide. 4 disulfides stabilise this stretch: cysteine 34-cysteine 75, cysteine 44-cysteine 68, cysteine 49-cysteine 72, and cysteine 53-cysteine 74.

Belongs to the DEFL family.

The protein localises to the secreted. The sequence is that of Putative defensin-like protein 133 (LCR33) from Arabidopsis thaliana (Mouse-ear cress).